The chain runs to 397 residues: Phosphoglycerate kinase (397 aa).

Substrate-binding positions include 25 to 27 (DLN), R41, 64 to 67 (HLGR), R118, and R151. Residues K202, E324, and 350–353 (GGDT) each bind ATP.

This sequence belongs to the phosphoglycerate kinase family. Monomer.

The protein localises to the cytoplasm. The enzyme catalyses (2R)-3-phosphoglycerate + ATP = (2R)-3-phospho-glyceroyl phosphate + ADP. The protein operates within carbohydrate degradation; glycolysis; pyruvate from D-glyceraldehyde 3-phosphate: step 2/5. The polypeptide is Phosphoglycerate kinase (Albidiferax ferrireducens (strain ATCC BAA-621 / DSM 15236 / T118) (Rhodoferax ferrireducens)).